The following is a 196-amino-acid chain: Protein LURP-one-related 8 (196 aa).

This sequence belongs to the LOR family.

Functionally, might be related to the phospholipid scramblase and tubby-like superfamily of membrane tethered transcription factors. In Arabidopsis thaliana (Mouse-ear cress), this protein is Protein LURP-one-related 8.